The chain runs to 984 residues: Detocs histidine-protein kinase DtcA (984 aa).

H645 is modified (phosphohistidine; by autocatalysis).

In terms of processing, autophosphorylated.

The enzyme catalyses ATP + protein L-histidine = ADP + protein N-phospho-L-histidine.. In terms of biological role, sensor-kinase member of the two-component regulatory system Detocs that confers resistance to bacteriophage. When the system (DtcA-DtcB-DtcC) is expressed in a susceptible E.coli (strain MG1655) it confers resistance to bacteriophages T2, T4, T5, T6 and SECphi27. Detocs inhibits T5 infection leading to growth arrest but not complete cell lysis, during SECphi27 infection leads to cell lysis. DtcA (this subunit) probably autophosphorylates upon sensing viral infection, and subsequently transfers the phosphate signal to DtcC which activates it, leading to an antiviral defense; DtcB may scavenge phosphorylation signals from accidental activation of DtcA. This is Detocs histidine-protein kinase DtcA from Vibrio alginolyticus.